A 404-amino-acid chain; its full sequence is Voltage-gated potassium channel subunit beta-3 (404 aa).

Over residues 1 to 14 the composition is skewed to polar residues; that stretch reads MQVSIACTEQNLRS. Residues 1 to 77 form a disordered region; sequence MQVSIACTEQ…LRESTGRGTG (77 aa). Residues 28-50 are compositionally biased toward gly residues; that stretch reads PGGGNGGPAGGGHGNPPGGGGSG. NADP(+) contacts are provided by T97, W98, Q104, and D126. Y131 serves as the catalytic Proton donor/acceptor. NADP(+) is bound by residues N199, S229, R230, Q255, W284, P286, L287, A288, C289, K295, R305, G364, S366, Q370, and E373.

Belongs to the shaker potassium channel beta subunit family. As to quaternary structure, forms heteromultimeric complex with alpha subunits. Interacts with KCNA5 and KCNB2. Brain specific. Most prominent expression in cerebellum. Weaker signals detected in cortex, occipital lobe, frontal lobe and temporal lobe. Not detected in spinal cord, heart, lung, liver, kidney, pancreas, placenta and skeletal muscle.

The protein resides in the cytoplasm. Functionally, regulatory subunit of the voltage-gated potassium (Kv) channels composed of pore-forming and potassium-conducting alpha subunits and of regulatory beta subunit. The beta-3/KCNAB3 subunit may mediate closure of potassium channels. Increases inactivation of Kv1.5/KCNA5 alpha subunit-containing channels. May display nicotinamide adenine dinucleotide phosphate (NADPH)-dependent aldoketoreductase activity. The binding of oxidized and reduced NADP(H) cofactors may be required for the regulation of potassium channel activity. The chain is Voltage-gated potassium channel subunit beta-3 from Homo sapiens (Human).